Consider the following 276-residue polypeptide: Rhomboid protease GlpG (276 aa).

6 helical membrane passes run 94–114 (GPVT…MSLI), 142–162 (IFMH…WYLG), 169–189 (LGSG…GYVQ), 192–212 (FSGP…GYVW), 229–249 (LIIF…GMSM), and 250–270 (ANGA…VDTL). Ser201 (nucleophile) is an active-site residue. His254 is an active-site residue.

It belongs to the peptidase S54 family.

Its subcellular location is the cell inner membrane. The enzyme catalyses Cleaves type-1 transmembrane domains using a catalytic dyad composed of serine and histidine that are contributed by different transmembrane domains.. Its function is as follows. Rhomboid-type serine protease that catalyzes intramembrane proteolysis. In Salmonella choleraesuis (strain SC-B67), this protein is Rhomboid protease GlpG.